The following is an 845-amino-acid chain: Protein P (845 aa).

The terminal protein domain (TP) stretch occupies residues 1 to 179 (MPLSYQHFRK…FCGSPYSWEQ (179 aa)). The spacer stretch occupies residues 180–348 (ELHHGRSVTK…YCLSHLVNLL (169 aa)). Disordered regions lie at residues 186–205 (SVTKTSQRHGDESFCSQPSG), 222–245 (QPRLGLQPHQGPLATSQSGRSGSI), and 288–318 (YSHLSTSKRQSSSGHAVEFHKVPPNSARSQS). Polar residues predominate over residues 289 to 301 (SHLSTSKRQSSSG). Residues 349 to 692 (EDWGPCADHG…YMNLYPVARQ (344 aa)) form a polymerase/reverse transcriptase domain (RT) region. The Reverse transcriptase domain occupies 359–602 (EHHIRIPRTP…YSLNFMGYII (244 aa)). Residues D431, D553, and D554 each contribute to the Mg(2+) site.

It belongs to the hepadnaviridae P protein family.

The enzyme catalyses DNA(n) + a 2'-deoxyribonucleoside 5'-triphosphate = DNA(n+1) + diphosphate. It carries out the reaction Endonucleolytic cleavage to 5'-phosphomonoester.. Its activity is regulated as follows. Activated by host HSP70 and HSP40 in vitro to be able to bind the epsilon loop of the pgRNA. Because deletion of the RNase H region renders the protein partly chaperone-independent, the chaperones may be needed indirectly to relieve occlusion of the RNA-binding site by this domain. Inhibited by several reverse-transcriptase inhibitors: Lamivudine, Adefovir and Entecavir. Functionally, multifunctional enzyme that converts the viral RNA genome into dsDNA in viral cytoplasmic capsids. This enzyme displays a DNA polymerase activity that can copy either DNA or RNA templates, and a ribonuclease H (RNase H) activity that cleaves the RNA strand of RNA-DNA heteroduplexes in a partially processive 3'- to 5'-endonucleasic mode. Neo-synthesized pregenomic RNA (pgRNA) are encapsidated together with the P protein, and reverse-transcribed inside the nucleocapsid. Initiation of reverse-transcription occurs first by binding the epsilon loop on the pgRNA genome, and is initiated by protein priming, thereby the 5'-end of (-)DNA is covalently linked to P protein. Partial (+)DNA is synthesized from the (-)DNA template and generates the relaxed circular DNA (RC-DNA) genome. After budding and infection, the RC-DNA migrates in the nucleus, and is converted into a plasmid-like covalently closed circular DNA (cccDNA). The activity of P protein does not seem to be necessary for cccDNA generation, and is presumably released from (+)DNA by host nuclear DNA repair machinery. The sequence is that of Protein P from Hepatitis B virus genotype A3 (isolate Cameroon/CMR711/1994) (HBV-A).